The primary structure comprises 226 residues: Endonuclease V (226 aa).

Residues Asp43 and Asp111 each contribute to the Mg(2+) site.

The protein belongs to the endonuclease V family. Mg(2+) is required as a cofactor.

The protein resides in the cytoplasm. The catalysed reaction is Endonucleolytic cleavage at apurinic or apyrimidinic sites to products with a 5'-phosphate.. Its function is as follows. DNA repair enzyme involved in the repair of deaminated bases. Selectively cleaves double-stranded DNA at the second phosphodiester bond 3' to a deoxyinosine leaving behind the intact lesion on the nicked DNA. The polypeptide is Endonuclease V (Nocardia farcinica (strain IFM 10152)).